A 120-amino-acid chain; its full sequence is SAGA-associated factor 11 (120 aa).

Residues 40-60 (SLLNSSNSNTNSNTNGTIASN) are compositionally biased toward low complexity. The segment at 40 to 82 (SLLNSSNSNTNSNTNGTIASNGGNGTTSDENNEIENSTIQDKS) is disordered. The SGF11-type zinc-finger motif lies at 93–114 (FRCLNCGRNIAGGRFASHISKC).

This sequence belongs to the SGF11 family. In terms of assembly, component of the 1.8 MDa SAGA transcription coactivator-HAT complex. SAGA is built of 5 distinct domains with specialized functions. Within the SAGA complex, SUS1, SGF11, SGF73 and UBP8 form an additional subcomplex of SAGA called the DUB module (deubiquitination module). Interacts directly with SGF73, SUS1 and UBP8.

It localises to the nucleus. Its function is as follows. Functions as a component of the transcription regulatory histone acetylation (HAT) complex SAGA. At the promoters, SAGA is required for recruitment of the basal transcription machinery. It influences RNA polymerase II transcriptional activity through different activities such as TBP interaction and promoter selectivity, interaction with transcription activators, and chromatin modification through histone acetylation and deubiquitination. SAGA acetylates nucleosomal histone H3 to some extent (to form H3K9ac, H3K14ac, H3K18ac and H3K23ac). SAGA interacts with DNA via upstream activating sequences (UASs). Involved in transcriptional regulation of a subset of SAGA-regulated genes. Within the SAGA complex, participates in a subcomplex, that specifically deubiquitinates histones H2B. This Candida albicans (strain SC5314 / ATCC MYA-2876) (Yeast) protein is SAGA-associated factor 11.